Consider the following 294-residue polypeptide: ATP synthase gamma chain (294 aa).

It belongs to the ATPase gamma chain family. In terms of assembly, F-type ATPases have 2 components, CF(1) - the catalytic core - and CF(0) - the membrane proton channel. CF(1) has five subunits: alpha(3), beta(3), gamma(1), delta(1), epsilon(1). CF(0) has three main subunits: a, b and c.

Its subcellular location is the cell inner membrane. Its function is as follows. Produces ATP from ADP in the presence of a proton gradient across the membrane. The gamma chain is believed to be important in regulating ATPase activity and the flow of protons through the CF(0) complex. This is ATP synthase gamma chain from Caulobacter sp. (strain K31).